We begin with the raw amino-acid sequence, 129 residues long: Large-conductance mechanosensitive channel (129 aa).

Helical transmembrane passes span 10-30 (FAVK…GAFG) and 70-90 (AVML…VIAI).

Belongs to the MscL family. In terms of assembly, homopentamer.

It is found in the cell inner membrane. Functionally, channel that opens in response to stretch forces in the membrane lipid bilayer. May participate in the regulation of osmotic pressure changes within the cell. The protein is Large-conductance mechanosensitive channel of Actinobacillus pleuropneumoniae serotype 3 (strain JL03).